Here is a 216-residue protein sequence, read N- to C-terminus: DNA replication complex GINS protein PSF3 (216 aa).

The interval 1-16 (MSEAYFRVESGALGPE) is not essential for folding and stability of GINS complex, but may regulate accessibility to the central complex pore.

The protein belongs to the GINS3/PSF3 family. As to quaternary structure, component of the GINS complex which is a heterotetramer of GINS1, GINS2, GINS3 and GINS4. Forms a stable subcomplex with GINS2. GINS complex interacts with DNA primase in vitro. Component of the CMG helicase complex, a hexameric ring of related MCM2-7 subunits stabilized by CDC45 and the tetrameric GINS complex.

It is found in the nucleus. The protein localises to the chromosome. In terms of biological role, required for correct functioning of the GINS complex, a complex that plays an essential role in the initiation of DNA replication, and progression of DNA replication forks. GINS complex is a core component of CDC45-MCM-GINS (CMG) helicase, the molecular machine that unwinds template DNA during replication, and around which the replisome is built. This is DNA replication complex GINS protein PSF3 (GINS3) from Bos taurus (Bovine).